Consider the following 116-residue polypeptide: Nucleoid-associated protein PMM0020 (116 aa).

The segment covering 87–98 has biased composition (basic and acidic residues); that stretch reads ESSTTTMKERMN. Residues 87-116 are disordered; that stretch reads ESSTTTMKERMNDLTGGLNLNLPGLDNNDS. Low complexity predominate over residues 99-116; that stretch reads DLTGGLNLNLPGLDNNDS.

The protein belongs to the YbaB/EbfC family. In terms of assembly, homodimer.

It localises to the cytoplasm. Its subcellular location is the nucleoid. Binds to DNA and alters its conformation. May be involved in regulation of gene expression, nucleoid organization and DNA protection. In Prochlorococcus marinus subsp. pastoris (strain CCMP1986 / NIES-2087 / MED4), this protein is Nucleoid-associated protein PMM0020.